The primary structure comprises 202 residues: uncharacterized protein (202 aa).

The 61-residue stretch at 14-74 folds into the HTH tetR-type domain; that stretch reads NAKTERILDV…AMADRYFQRC (61 aa).

This is an uncharacterized protein from Xanthobacter autotrophicus.